We begin with the raw amino-acid sequence, 333 residues long: MLLLPFQLLAVLFPGGNSEHAFQGPTSFHVIQTSSFTNSTWAQTQGSGWLDDLQIHGWDSDSGTAIFLKPWSKGNFSDKEVAELEEIFRVYILGFAREVQDFAGDFQMKYPFEIQGIAGCGLHSGGAIVSFLRGALGGLDFLSVKNASCVPSPEGGSRAQKVCALIMQYQGIMEIVRLLLYKTCPRYLLGVLNAGKADLQGKMKPEAWLSSGPSPGPGRLLLVCHVSGFCPKPVWVMWMPGEQEQQGTQLGDILPNANWTWYLRATLDVAAGEAAGLSCRVKHSSLEGQDIILYWSNPTSIGSIVLAIIVPSLLLLLCLALWYMRRRSYQNIP.

An N-terminal signal peptide occupies residues 1 to 18 (MLLLPFQLLAVLFPGGNS). Topologically, residues 19-303 (EHAFQGPTSF…YWSNPTSIGS (285 aa)) are extracellular. N38, N75, and N146 each carry an N-linked (GlcNAc...) asparagine glycan. 3 disulfide bridges follow: C120-C184, C149-C163, and C224-C279. Residues 185 to 295 (PRYLLGVLNA…LEGQDIILYW (111 aa)) form the Ig-like domain. N258 carries an N-linked (GlcNAc...) asparagine glycan. Residues 304-324 (IVLAIIVPSLLLLLCLALWYM) form a helical membrane-spanning segment. Topologically, residues 325-333 (RRRSYQNIP) are cytoplasmic. Positions 329–332 (YQNI) match the Internalization signal motif.

Heterodimer with B2M (beta-2-microglobulin). Interacts with saposin C. Expressed in lymphocytes, spleen, lung, liver, kidney and heart.

Its subcellular location is the cell membrane. The protein resides in the endosome membrane. It localises to the lysosome membrane. In terms of biological role, antigen-presenting protein that binds self and non-self lipid and glycolipid antigens and presents them to T-cell receptors on natural killer T-cells. This chain is T-cell surface glycoprotein CD1b (CD1B), found in Aotus nancymaae (Ma's night monkey).